The primary structure comprises 775 residues: Meiotic driver SPOK2 (775 aa).

The stretch at 4 to 69 (KDRIAQLLRE…RCERERLQLE (66 aa)) forms a coiled coil. Disordered stretches follow at residues 18-51 (KARE…REEE), 211-249 (QKDD…YICS), 442-525 (LSSA…AMAD), and 734-761 (PPPK…AQLF). The segment covering 444-457 (SAPSSQNTDISEYT) has biased composition (polar residues).

It localises to the cytoplasm. It is found in the nucleus. Its function is as follows. Promotes unequal transmission of alleles from the parental zygote to progeny spores by acting as poison/antidote system, leading to poisoning of progeny that do not inherit the allele. May possess DNA nuclease activity that leads to spore killing, and a kinase activity that confers resistance to the nuclease activity. The chain is Meiotic driver SPOK2 from Podospora anserina (strain S / ATCC MYA-4624 / DSM 980 / FGSC 10383) (Pleurage anserina).